The primary structure comprises 264 residues: Endoglucanase S (264 aa).

Positions Met1–Ala32 are cleaved as a signal peptide.

It belongs to the glycosyl hydrolase 12 (cellulase H) family.

It catalyses the reaction Endohydrolysis of (1-&gt;4)-beta-D-glucosidic linkages in cellulose, lichenin and cereal beta-D-glucans.. This Pectobacterium parmentieri protein is Endoglucanase S (celS).